We begin with the raw amino-acid sequence, 372 residues long: Citrate/2-methylcitrate synthase (372 aa).

His-188 lines the substrate pocket. His-223 is an active-site residue. CoA is bound at residue 256-260 (KIMGF). His-262 is a catalytic residue. Substrate is bound at residue Arg-272. The active site involves Asp-314. Substrate is bound by residues Arg-339 and Arg-358.

The protein belongs to the citrate synthase family.

It catalyses the reaction propanoyl-CoA + oxaloacetate + H2O = 2-methylcitrate + CoA + H(+). The catalysed reaction is oxaloacetate + acetyl-CoA + H2O = citrate + CoA + H(+). It participates in carbohydrate metabolism; tricarboxylic acid cycle; isocitrate from oxaloacetate: step 1/2. Involved in both the tricarboxylic acid (TCA) and methylcitric acid cycles. Has both 2-methylcitrate synthase and citrate synthase activities. Catalyzes the condensation of propionyl-CoA and oxaloacetate to yield 2-methylcitrate (2-MC) and CoA, and the condensation of acetyl-CoA and oxaloacetate to yield citrate and CoA. Has 2.3-fold higher activity as a 2-methylcitrate synthase. Catalyzes the formation of either (2S,3R)- or (2R,3S)-2-methylcitrate. In Bacillus subtilis (strain 168), this protein is Citrate/2-methylcitrate synthase.